The primary structure comprises 438 residues: Nudix hydrolase 19, chloroplastic (438 aa).

The N-terminal 36 residues, methionine 1 to methionine 36, are a transit peptide targeting the chloroplast. The Zn(2+) site is built by cysteine 212, cysteine 215, cysteine 230, and cysteine 235. Substrate is bound by residues tyrosine 240, alanine 276–phenylalanine 278, glutamate 292, glutamate 296, and glutamate 342. The 131-residue stretch at proline 241–alanine 371 folds into the Nudix hydrolase domain. Mg(2+)-binding residues include alanine 276, glutamate 292, glutamate 296, and glutamate 342. Residues glycine 277–glycine 298 carry the Nudix box motif. Residues proline 422–aspartate 424 carry the Microbody targeting signal motif.

Belongs to the Nudix hydrolase family. NudC subfamily. Mg(2+) is required as a cofactor. Requires Zn(2+) as cofactor. Expressed in roots, leaves, stems and inflorescences.

It is found in the plastid. The protein resides in the chloroplast. It catalyses the reaction a 5'-end NAD(+)-phospho-ribonucleoside in mRNA + H2O = a 5'-end phospho-adenosine-phospho-ribonucleoside in mRNA + beta-nicotinamide D-ribonucleotide + 2 H(+). The enzyme catalyses NAD(+) + H2O = beta-nicotinamide D-ribonucleotide + AMP + 2 H(+). The catalysed reaction is NADH + H2O = reduced beta-nicotinamide D-ribonucleotide + AMP + 2 H(+). MRNA decapping enzyme that specifically removes the nicotinamide adenine dinucleotide (NAD) cap from a subset of mRNAs by hydrolyzing the diphosphate linkage to produce nicotinamide mononucleotide (NMN) and 5' monophosphate mRNA. The NAD-cap is present at the 5'-end of some RNAs; in contrast to the canonical N7 methylguanosine (m7G) cap, the NAD cap promotes mRNA decay. Mediates the hydrolysis of some nucleoside diphosphate derivatives. Has a high affinity for NADPH compared with that for NADH. This chain is Nudix hydrolase 19, chloroplastic (NUDT19), found in Arabidopsis thaliana (Mouse-ear cress).